Consider the following 95-residue polypeptide: MADDKPKEGVKTENNDHINLKVAGQDGSVVQFKIKRHTPLNKLMKAYCERQGLSMRQIRFRFDGQPINETDTPAQLEMEDEDTIDVFQQQTGGSY.

Residue K11 forms a Glycyl lysine isopeptide (Lys-Gly) (interchain with G-Cter in SUMO) linkage. The Ubiquitin-like domain maps to D16–Y95. G93 is covalently cross-linked (Glycyl lysine isopeptide (Gly-Lys) (interchain with K-? in acceptor proteins)). A propeptide spanning residues S94–Y95 is cleaved from the precursor.

This sequence belongs to the ubiquitin family. SUMO subfamily. As to quaternary structure, interacts with sae2 and ube2i. Covalently attached to a number of proteins, including top2. Polymeric chains can be formed through Lys-11 cross-linking. In terms of processing, cleavage of precursor form by a sentrin-specific protease is necessary for function.

Its subcellular location is the nucleus. In terms of biological role, ubiquitin-like protein that can be covalently attached to proteins as a monomer or as a lysine-linked polymer. Covalent attachment via an isopeptide bond to its substrates requires prior activation by the E1 complex sae1-sae2 and linkage to the E2 enzyme ube2i, and can be promoted by an E3 ligase such as pias1-4. This post-translational modification on lysine residues of proteins plays a crucial role in a number of cellular processes such as nuclear transport, DNA replication and repair, mitosis and signal transduction. Polymeric sumo2 chains are also susceptible to polyubiquitination which functions as a signal for proteasomal degradation of modified proteins. The chain is Small ubiquitin-related modifier 2-B (sumo2-b) from Xenopus laevis (African clawed frog).